A 200-amino-acid chain; its full sequence is dITP/XTP pyrophosphatase (200 aa).

Residue Thr-8 to Lys-13 coordinates substrate. Residues Glu-41 and Asp-71 each contribute to the Mg(2+) site. Catalysis depends on Asp-71, which acts as the Proton acceptor. Residues Thr-72, Phe-153 to Asp-156, Lys-176, and His-181 to Arg-182 contribute to the substrate site.

Belongs to the HAM1 NTPase family. In terms of assembly, homodimer. The cofactor is Mg(2+).

It carries out the reaction XTP + H2O = XMP + diphosphate + H(+). The catalysed reaction is dITP + H2O = dIMP + diphosphate + H(+). The enzyme catalyses ITP + H2O = IMP + diphosphate + H(+). In terms of biological role, pyrophosphatase that catalyzes the hydrolysis of nucleoside triphosphates to their monophosphate derivatives, with a high preference for the non-canonical purine nucleotides XTP (xanthosine triphosphate), dITP (deoxyinosine triphosphate) and ITP. Seems to function as a house-cleaning enzyme that removes non-canonical purine nucleotides from the nucleotide pool, thus preventing their incorporation into DNA/RNA and avoiding chromosomal lesions. This Caldanaerobacter subterraneus subsp. tengcongensis (strain DSM 15242 / JCM 11007 / NBRC 100824 / MB4) (Thermoanaerobacter tengcongensis) protein is dITP/XTP pyrophosphatase.